Reading from the N-terminus, the 111-residue chain is Large ribosomal subunit protein uL22 (111 aa).

The protein belongs to the universal ribosomal protein uL22 family. Part of the 50S ribosomal subunit.

Its function is as follows. This protein binds specifically to 23S rRNA; its binding is stimulated by other ribosomal proteins, e.g. L4, L17, and L20. It is important during the early stages of 50S assembly. It makes multiple contacts with different domains of the 23S rRNA in the assembled 50S subunit and ribosome. In terms of biological role, the globular domain of the protein is located near the polypeptide exit tunnel on the outside of the subunit, while an extended beta-hairpin is found that lines the wall of the exit tunnel in the center of the 70S ribosome. This is Large ribosomal subunit protein uL22 from Acholeplasma laidlawii.